We begin with the raw amino-acid sequence, 231 residues long: Enolase-phosphatase E1 (231 aa).

This sequence belongs to the HAD-like hydrolase superfamily. MasA/MtnC family. In terms of assembly, monomer. Mg(2+) serves as cofactor.

The enzyme catalyses 5-methylsulfanyl-2,3-dioxopentyl phosphate + H2O = 1,2-dihydroxy-5-(methylsulfanyl)pent-1-en-3-one + phosphate. Its pathway is amino-acid biosynthesis; L-methionine biosynthesis via salvage pathway; L-methionine from S-methyl-5-thio-alpha-D-ribose 1-phosphate: step 3/6. It participates in amino-acid biosynthesis; L-methionine biosynthesis via salvage pathway; L-methionine from S-methyl-5-thio-alpha-D-ribose 1-phosphate: step 4/6. Its function is as follows. Bifunctional enzyme that catalyzes the enolization of 2,3-diketo-5-methylthiopentyl-1-phosphate (DK-MTP-1-P) into the intermediate 2-hydroxy-3-keto-5-methylthiopentenyl-1-phosphate (HK-MTPenyl-1-P), which is then dephosphorylated to form the acireductone 1,2-dihydroxy-3-keto-5-methylthiopentene (DHK-MTPene). This is Enolase-phosphatase E1 from Granulibacter bethesdensis (strain ATCC BAA-1260 / CGDNIH1).